We begin with the raw amino-acid sequence, 425 residues long: MTIVEDAKKGLITEEMKVVAKSEGVTEDFIRRGIAGGHIVIPMTPYRKVKLCGIGSGLRTKVNASIGTSSDIVNVEEELEKARQAELAGADSLMELSTGGDFLDIRRRVCEQSNLSVGSVPLYQAFIEAARNKGGVVFMDEDDLFKITEQQAKLGTNFMAIHTGINYETVKRLKNQGRHGGLVSRGGAFMTAWMLHNEMENPLYRRFDYLVEILKEHEVTLSFGNGMRAGACHDATDRAAIQELLINAELADQAHNAGVQCILEGPGHIPLDEIKTNVQLEKRVTNNKPFYMLGPLVTDIAPGYDDRVAAIGASVSSAAGADFICYVTPAEHLALPTPEEVYEGVMSSRIAAHVGDMVKLPKTREADLEMGHARRDLDWERQYAVSINAEKARCIRNSRMPADSDACTMCGDFCAIKIVQKTFNF.

Substrate-binding positions include M94, Y123, H162, 184-186 (SRG), 225-228 (NGMR), and E264. Residue H268 participates in Zn(2+) binding. Y291 provides a ligand contact to substrate. Residue H332 participates in Zn(2+) binding. Residues C407, C410, and C414 each contribute to the [4Fe-4S] cluster site.

Belongs to the ThiC family. [4Fe-4S] cluster serves as cofactor.

The catalysed reaction is 5-amino-1-(5-phospho-beta-D-ribosyl)imidazole + S-adenosyl-L-methionine = 4-amino-2-methyl-5-(phosphooxymethyl)pyrimidine + CO + 5'-deoxyadenosine + formate + L-methionine + 3 H(+). Its pathway is cofactor biosynthesis; thiamine diphosphate biosynthesis. In terms of biological role, catalyzes the synthesis of the hydroxymethylpyrimidine phosphate (HMP-P) moiety of thiamine from aminoimidazole ribotide (AIR) in a radical S-adenosyl-L-methionine (SAM)-dependent reaction. The chain is Phosphomethylpyrimidine synthase from Methanocorpusculum labreanum (strain ATCC 43576 / DSM 4855 / Z).